We begin with the raw amino-acid sequence, 252 residues long: 3-dehydroquinate dehydratase (252 aa).

Residues 46–48 (EWR) and Arg-82 each bind 3-dehydroquinate. His-143 (proton donor/acceptor) is an active-site residue. Lys-170 (schiff-base intermediate with substrate) is an active-site residue. 3-dehydroquinate-binding residues include Arg-212, Ser-231, and Gln-235.

This sequence belongs to the type-I 3-dehydroquinase family. Homodimer.

The enzyme catalyses 3-dehydroquinate = 3-dehydroshikimate + H2O. It functions in the pathway metabolic intermediate biosynthesis; chorismate biosynthesis; chorismate from D-erythrose 4-phosphate and phosphoenolpyruvate: step 3/7. Its function is as follows. Involved in the third step of the chorismate pathway, which leads to the biosynthesis of aromatic amino acids. Catalyzes the cis-dehydration of 3-dehydroquinate (DHQ) and introduces the first double bond of the aromatic ring to yield 3-dehydroshikimate. This chain is 3-dehydroquinate dehydratase, found in Listeria monocytogenes serotype 4a (strain HCC23).